A 115-amino-acid polypeptide reads, in one-letter code: Large ribosomal subunit protein bL19 (115 aa).

This sequence belongs to the bacterial ribosomal protein bL19 family.

This protein is located at the 30S-50S ribosomal subunit interface and may play a role in the structure and function of the aminoacyl-tRNA binding site. The sequence is that of Large ribosomal subunit protein bL19 from Sodalis glossinidius (strain morsitans).